Here is a 274-residue protein sequence, read N- to C-terminus: Large ribosomal subunit protein uL2 (274 aa).

Positions 195-274 (VGNSDHGLER…SKYIIERRKK (80 aa)) are disordered. Basic residues-rich tracts occupy residues 207 to 220 (KAGR…RPRN) and 244 to 264 (PRSR…KKQS).

The protein belongs to the universal ribosomal protein uL2 family. Part of the 50S ribosomal subunit. Forms a bridge to the 30S subunit in the 70S ribosome.

In terms of biological role, one of the primary rRNA binding proteins. Required for association of the 30S and 50S subunits to form the 70S ribosome, for tRNA binding and peptide bond formation. It has been suggested to have peptidyltransferase activity; this is somewhat controversial. Makes several contacts with the 16S rRNA in the 70S ribosome. The sequence is that of Large ribosomal subunit protein uL2 from Bacteroides thetaiotaomicron (strain ATCC 29148 / DSM 2079 / JCM 5827 / CCUG 10774 / NCTC 10582 / VPI-5482 / E50).